A 115-amino-acid polypeptide reads, in one-letter code: Evasin P1183 (115 aa).

The N-terminal stretch at 1–25 is a signal peptide; sequence MTRNWSFRVIFVSAMWCALLKFATL. Disulfide bonds link Cys-38–Cys-58, Cys-54–Cys-94, Cys-70–Cys-99, and Cys-89–Cys-108. N-linked (GlcNAc...) asparagine glycans are attached at residues Asn-45, Asn-72, and Asn-103.

The protein localises to the secreted. In terms of biological role, salivary chemokine-binding protein which binds to host chemokine CCL2. In Amblyomma triste (Neotropical tick), this protein is Evasin P1183.